The primary structure comprises 100 residues: Small ribosomal subunit protein uS14c (100 aa).

This sequence belongs to the universal ribosomal protein uS14 family. As to quaternary structure, part of the 30S ribosomal subunit.

It localises to the plastid. It is found in the chloroplast. In terms of biological role, binds 16S rRNA, required for the assembly of 30S particles. This chain is Small ribosomal subunit protein uS14c, found in Coffea arabica (Arabian coffee).